Reading from the N-terminus, the 520-residue chain is Ribonuclease Y (520 aa).

A helical membrane pass occupies residues 3–23 (IEIAIVLILAAAGLGYFVGNM). The KH domain occupies 210–273 (SVSVVALPSD…EVAKIALEKL (64 aa)). The 94-residue stretch at 336–429 (VYQHSLEVAF…VQAADALSGA (94 aa)) folds into the HD domain.

Belongs to the RNase Y family.

The protein resides in the cell membrane. Functionally, endoribonuclease that initiates mRNA decay. The sequence is that of Ribonuclease Y from Geobacter metallireducens (strain ATCC 53774 / DSM 7210 / GS-15).